The primary structure comprises 466 residues: MTLKASEGESGGSMHTALSDLYLEHLLQKRSRPEAVSHPLNTVTEDMYTNGSPAPGSPAQVKGQEVRKVRLIQFEKVTEEPMGITLKLNEKQSCTVARILHGGMIHRQGSLHVGDEILEINGTNVTNHSVDQLQKAMKETKGMISLKVIPNQQSRLPALQMFMRAQFDYDPKKDNLIPCKEAGLKFATGDIIQIINKDDSNWWQGRVEGSSKESAGLIPSPELQEWRVASVAQSAPSEAPSCSPFGKKKKYKDKYLAKHSSIFDQLDVVSYEEVVRLPAFKRKTLVLIGASGVGRSHIKNALLSQNPEKFVYPVPYTTRPPRKSEEDGKEYHFISTEEMTRNISANEFLEFGSYQGNMFGTKFETVHQIHKQDKIAILDIEPQTLKIVRTAELSPFIVFIAPTDQGTQTEALQQLQKDSEAIRSQYAHYFDLSLVNNGVDETLKKLQEAFDQACSSPQWVPVSWVY.

T2 is subject to N-acetylthreonine. Phosphoserine is present on residues S13 and S19. Residue T49 is modified to Phosphothreonine. A phosphoserine mark is found at S52, S57, and S110. In terms of domain architecture, PDZ spans 71–152; sequence LIQFEKVTEE…MISLKVIPNQ (82 aa). Residues 158-228 form the SH3 domain; it reads ALQMFMRAQF…PSPELQEWRV (71 aa). A Phosphoserine modification is found at S243. The segment at 268–466 is interaction with PALS1; the sequence is VVSYEEVVRL…PQWVPVSWVY (199 aa). Residues 282–451 enclose the Guanylate kinase-like domain; the sequence is RKTLVLIGAS…TLKKLQEAFD (170 aa).

This sequence belongs to the MAGUK family. Heterodimer with PALS1. Interacts with DLG5 and NF2. Interacts (via guanylate kinase-like domain) with WHRN (via third PDZ domain). Post-translationally, palmitoylated.

It localises to the cell membrane. It is found in the cell projection. The protein resides in the stereocilium. Functionally, essential regulator of neutrophil polarity. Regulates neutrophil polarization by regulating AKT1 phosphorylation through a mechanism that is independent of PIK3CG activity. The polypeptide is 55 kDa erythrocyte membrane protein (MPP1) (Pongo abelii (Sumatran orangutan)).